A 249-amino-acid chain; its full sequence is tRNA (guanine-N(1)-)-methyltransferase (249 aa).

S-adenosyl-L-methionine contacts are provided by residues G118 and 138–143 (IGDYVL).

The protein belongs to the RNA methyltransferase TrmD family. Homodimer.

It localises to the cytoplasm. It carries out the reaction guanosine(37) in tRNA + S-adenosyl-L-methionine = N(1)-methylguanosine(37) in tRNA + S-adenosyl-L-homocysteine + H(+). In terms of biological role, specifically methylates guanosine-37 in various tRNAs. This Alkaliphilus oremlandii (strain OhILAs) (Clostridium oremlandii (strain OhILAs)) protein is tRNA (guanine-N(1)-)-methyltransferase.